The primary structure comprises 449 residues: GTPase Der (449 aa).

2 consecutive EngA-type G domains span residues 2 to 169 and 180 to 355; these read FTVA…QLPP and VRFC…EQLT. GTP-binding positions include 8 to 15, 55 to 59, 118 to 121, 186 to 193, 233 to 237, and 298 to 301; these read GRPNVGKS, DTGGL, NKSE, GKPNVGKS, DTAGI, and NKWD. Residues 356-440 enclose the KH-like domain; the sequence is KKISTSLLND…PITLYFKSKN (85 aa).

Belongs to the TRAFAC class TrmE-Era-EngA-EngB-Septin-like GTPase superfamily. EngA (Der) GTPase family. In terms of assembly, associates with the 50S ribosomal subunit.

Functionally, GTPase that plays an essential role in the late steps of ribosome biogenesis. The polypeptide is GTPase Der (Mycoplasma pneumoniae (strain ATCC 29342 / M129 / Subtype 1) (Mycoplasmoides pneumoniae)).